The following is a 274-amino-acid chain: MEALRQRIETAFENRQHITPGTVEPSLRADVETVIAMLDKGEARVAEKINGQWQVHQWLKKAVLLSFRIFDNGVIDGGDTKYFDKVPQKFADYDEARFKAEAIRVVPPATVRKGSFIGKNTVLMPSYVNLGAYVDEGTMVDTWATVGSCAQIGKNVHLSGGVGIGGVLEPLQAGPTIIEDNCFIGARSEIVEGVVVEEGSVISMGVYIGQSTRIFDRETGEVHYGRVPAGSVVVSGNLPSACGKYSLYAAIIVKKVDAKTRAKVGINELLRIVD.

The substrate site is built by R104 and D141.

It belongs to the transferase hexapeptide repeat family. In terms of assembly, homotrimer.

The protein localises to the cytoplasm. It catalyses the reaction (S)-2,3,4,5-tetrahydrodipicolinate + succinyl-CoA + H2O = (S)-2-succinylamino-6-oxoheptanedioate + CoA. It functions in the pathway amino-acid biosynthesis; L-lysine biosynthesis via DAP pathway; LL-2,6-diaminopimelate from (S)-tetrahydrodipicolinate (succinylase route): step 1/3. The polypeptide is 2,3,4,5-tetrahydropyridine-2,6-dicarboxylate N-succinyltransferase (Shewanella denitrificans (strain OS217 / ATCC BAA-1090 / DSM 15013)).